Here is a 421-residue protein sequence, read N- to C-terminus: MMEVLVLGSGVVGLTSAWYLAQAGHDVTVVDRQPRGAEETSFANAGQISYGYSSPWAAPGIPQKALKWMLEKHAPLKIQPSLDPALLSWMGKMLLNCQLSRYQVNKSRMLAIANYSRECLKALNQTYSLDYQGRQRGTLQVFRDEKQLTAIEKDMQLLAQSGVRFELLNVAQCLTHEPGLAPVQEKLVGGLWLPDDETGDCYLFCQQLTELAKQQGVRFHFDCHIQQLVCEGKKIIGVQTDLGLLKADAYVVALGSYSTSLLKPLGIEIPVYPVKGYSLTLPIIDEKFAPQSTVMDETYKVALTRFSDRIRVAGTAELAGFDPAIPEARKATIEMVARDLFPHGGDFAKGQFWTGFRPMTPDGTPIIGATPYTNLYTNTGHGTLGWTMACGSASILADVLTHGESPLSRLGLDLFRYPKAS.

4–18 (VLVLGSGVVGLTSAW) contacts FAD.

The protein belongs to the DadA oxidoreductase family. FAD is required as a cofactor.

It catalyses the reaction a D-alpha-amino acid + A + H2O = a 2-oxocarboxylate + AH2 + NH4(+). Its function is as follows. Oxidative deamination of D-amino acids. The sequence is that of D-amino acid dehydrogenase from Vibrio cholerae serotype O1 (strain ATCC 39315 / El Tor Inaba N16961).